Consider the following 1040-residue polypeptide: V(D)J recombination-activating protein 1 (1040 aa).

Residues 39-53 (EKAPEEAQKEKDSSE) show a composition bias toward basic and acidic residues. Residues 39 to 71 (EKAPEEAQKEKDSSEGKPYLEQSPVVPEKPGGQ) form a disordered region. A Glycyl lysine isopeptide (Lys-Gly) (interchain with G-Cter in ubiquitin) cross-link involves residue Lys-233. 15 residues coordinate Zn(2+): Cys-266, His-270, Cys-290, Cys-293, His-295, Cys-305, His-307, Cys-310, Cys-313, Cys-325, Cys-328, Cys-355, Cys-360, His-372, and His-376. Residues 290 to 329 (CQICEHILADPVETSCKHLFCRICILRCLKVMGSYCPSCR) form an RING-type zinc finger. Residues 351–380 (LMVKCPAQDCNEEVSLEKYNHHVSSHKESK) form an RAG1-type zinc finger. The segment at residues 389 to 456 (GGRPRQHLLS…QADELEAIMQ (68 aa)) is a DNA-binding region (NBD). A divalent metal cation-binding residues include Asp-600, Asp-708, and Glu-962.

This sequence belongs to the RAG1 family. Homodimer. Component of the RAG complex composed of core components RAG1 and RAG2, and associated component HMGB1 or HMGB2. Interacts with DCAF1, leading to recruitment of the CUL4A-RBX1-DDB1-DCAF1/VPRBP complex to ubiquitinate proteins and limit error-prone repair during V(D)J recombination. Mg(2+) is required as a cofactor. The cofactor is Mn(2+). Autoubiquitinated in the presence of CDC34/UBCH3. In terms of tissue distribution, maturing lymphoid cells and central nervous system.

It is found in the nucleus. The enzyme catalyses S-ubiquitinyl-[E2 ubiquitin-conjugating enzyme]-L-cysteine + [acceptor protein]-L-lysine = [E2 ubiquitin-conjugating enzyme]-L-cysteine + N(6)-ubiquitinyl-[acceptor protein]-L-lysine.. Its function is as follows. Catalytic component of the RAG complex, a multiprotein complex that mediates the DNA cleavage phase during V(D)J recombination. V(D)J recombination assembles a diverse repertoire of immunoglobulin and T-cell receptor genes in developing B and T-lymphocytes through rearrangement of different V (variable), in some cases D (diversity), and J (joining) gene segments. In the RAG complex, RAG1 mediates the DNA-binding to the conserved recombination signal sequences (RSS) and catalyzes the DNA cleavage activities by introducing a double-strand break between the RSS and the adjacent coding segment. RAG2 is not a catalytic component but is required for all known catalytic activities. DNA cleavage occurs in 2 steps: a first nick is introduced in the top strand immediately upstream of the heptamer, generating a 3'-hydroxyl group that can attack the phosphodiester bond on the opposite strand in a direct transesterification reaction, thereby creating 4 DNA ends: 2 hairpin coding ends and 2 blunt, 5'-phosphorylated ends. The chromatin structure plays an essential role in the V(D)J recombination reactions and the presence of histone H3 trimethylated at 'Lys-4' (H3K4me3) stimulates both the nicking and haipinning steps. The RAG complex also plays a role in pre-B cell allelic exclusion, a process leading to expression of a single immunoglobulin heavy chain allele to enforce clonality and monospecific recognition by the B-cell antigen receptor (BCR) expressed on individual B-lymphocytes. The introduction of DNA breaks by the RAG complex on one immunoglobulin allele induces ATM-dependent repositioning of the other allele to pericentromeric heterochromatin, preventing accessibility to the RAG complex and recombination of the second allele. In addition to its endonuclease activity, RAG1 also acts as an E3 ubiquitin-protein ligase that mediates monoubiquitination of histone H3. Histone H3 monoubiquitination is required for the joining step of V(D)J recombination. Mediates polyubiquitination of KPNA1. The sequence is that of V(D)J recombination-activating protein 1 (Rag1) from Mus musculus (Mouse).